Reading from the N-terminus, the 359-residue chain is 4-galactosyl-N-acetylglucosaminide 3-alpha-L-fucosyltransferase 9 (359 aa).

At 1 to 11 (MTSTSKGILRP) the chain is on the cytoplasmic side. The chain crosses the membrane as a helical; Signal-anchor for type II membrane protein span at residues 12–32 (FLIVCIILGCFVACLLIYIKP). At 33–359 (TNSWVFSPME…VGNLEKWFWN (327 aa)) the chain is on the lumenal side. Residue asparagine 62 is glycosylated (N-linked (GlcNAc...) asparagine). Residues 63–168 (ETTILVWVWP…RRDSDIQVPY (106 aa)) form an acceptor-binding region. An a beta-D-galactosyl-(1-&gt;4)-N-acetyl-beta-D-glucosaminyl derivative-binding site is contributed by glutamine 75. Intrachain disulfides connect cysteine 82/cysteine 335, cysteine 91/cysteine 338, and cysteine 190/cysteine 238. A glycan (N-linked (GlcNAc...) asparagine) is linked at asparagine 101. Residue glutamate 137 participates in a beta-D-galactosyl-(1-&gt;4)-N-acetyl-beta-D-glucosaminyl derivative binding. Glutamate 137 serves as the catalytic Nucleophile. Glutamate 137 contributes to the GDP-beta-L-fucose binding site. An N-linked (GlcNAc...) asparagine glycan is attached at asparagine 153. Positions 168, 192, 194, 195, 202, 226, 241, 246, 252, 255, and 256 each coordinate GDP-beta-L-fucose. The tract at residues 169–326 (GFLTVSTSPF…NWRKDFTVNL (158 aa)) is donor-binding. Residues 327–359 (PRFWESHACLACDHVKRHQEYKSVGNLEKWFWN) form an acceptor-binding region.

It belongs to the glycosyltransferase 10 family. As to quaternary structure, homodimer. N-glycosylated with complex-type N-glycans.

It localises to the golgi apparatus. The protein resides in the trans-Golgi network membrane. Its subcellular location is the golgi apparatus membrane. The enzyme catalyses a beta-D-galactosyl-(1-&gt;4)-N-acetyl-beta-D-glucosaminyl derivative + GDP-beta-L-fucose = a beta-D-galactosyl-(1-&gt;4)-[alpha-L-fucosyl-(1-&gt;3)]-N-acetyl-beta-D-glucosaminyl derivative + GDP + H(+). It carries out the reaction an alpha-Neu5Ac-(2-&gt;3)-beta-D-Gal-(1-&gt;4)-beta-D-GlcNAc-(1-&gt;3)-beta-D-Gal-(1-&gt;4)-beta-D-GlcNAc derivative + GDP-beta-L-fucose = an alpha-Neu5Ac-(2-&gt;3)-beta-D-Gal-(1-&gt;4)-beta-D-GlcNAc-(1-&gt;3)-beta-D-Gal-(1-&gt;4)-[alpha-L-Fuc-(1-&gt;3)]-beta-D-GlcNAc derivative + GDP + H(+). The catalysed reaction is alpha-N-glycoloylneuraminosyl-(2-&gt;3)-beta-D-galactosyl-(1-&gt;4)-N-acetyl-beta-D-glucosaminyl-(1-&gt;3)-beta-D-galactosyl-(1-&gt;4)-N-acetyl-beta-D-glucosaminyl-(1-&gt;3)-beta-D-galactosyl-(1-&gt;4)-beta-D-glucosyl-(1&lt;-&gt;1')-ceramide + GDP-beta-L-fucose = alpha-N-glycoloylneuraminosyl-(2-&gt;3)-beta-D-galactosyl-(1-&gt;4)-N-acetyl-beta-D-glucosaminyl-(1-&gt;3)-beta-D-galactosyl-(1-&gt;4)-[alpha-L-fucosyl-(1-&gt;3)]-N-acetyl-beta-D-glucosaminyl-(1-&gt;3)-beta-D-galactosyl-(1-&gt;4)-beta-D-glucosyl-(1&lt;-&gt;1')-ceramide + GDP + H(+). It catalyses the reaction alpha-D-galactosyl-(1-&gt;3)-beta-D-galactosyl-(1-&gt;4)-N-acetyl-beta-D-glucosaminyl-(1-&gt;3)-beta-D-galactosyl-(1-&gt;4)-beta-D-glucosyl-(1&lt;-&gt;1')-ceramide + GDP-beta-L-fucose = a neolactoside IV(3)-alpha-Gal,III(3)-alpha-Fuc-nLc4Cer + GDP + H(+). The enzyme catalyses a neolactoside nLc4Cer + GDP-beta-L-fucose = a neolactoside III(3)-alpha-Fuc-nLc4Cer + GDP + H(+). It carries out the reaction an N-acetyl-alpha-neuraminyl-(2-&gt;3)-beta-D-galactosyl-(1-&gt;4)-N-acetyl-beta-D-glucosaminyl derivative + GDP-beta-L-fucose = an alpha-Neu5Ac-(2-&gt;3)-beta-D-Gal-(1-&gt;4)-[alpha-L-Fuc-(1-&gt;3)]-beta-D-GlcNAc derivative + GDP + H(+). The catalysed reaction is beta-D-Gal-(1-&gt;4)-beta-D-GlcNAc-(1-&gt;3)-beta-D-Gal-(1-&gt;4)-D-Glc + GDP-beta-L-fucose = beta-D-Gal-(1-&gt;4)-[alpha-L-Fuc-(1-&gt;3)]-beta-D-GlcNAc-(1-&gt;3)-beta-D-Gal-(1-&gt;4)-D-Glc + GDP + H(+). It catalyses the reaction an alpha-L-Fuc-(1-&gt;2)-beta-D-Gal-(1-&gt;4)-beta-D-GlcNAc derivative + GDP-beta-L-fucose = an alpha-L-Fuc-(1-&gt;2)-beta-D-Gal-(1-&gt;4)-[alpha-L-Fuc-(1-&gt;3)]-beta-D-GlcNAc derivative + GDP + H(+). Its pathway is protein modification; protein glycosylation. It functions in the pathway glycolipid biosynthesis. Its activity is regulated as follows. Activated by Mn2+. Catalyzes alpha(1-&gt;3) linkage of fucosyl moiety transferred from GDP-beta-L-fucose to N-acetyl glucosamine (GlcNAc) within type 2 lactosamine (LacNAc, beta-D-Gal-(1-&gt;4)-beta-D-GlcNAc-) glycan attached to glycolipids and N- or O-linked glycoproteins. Fucosylates distal type 2 LacNAc and its fucosylated (H-type 2 LacNAc) and sialylated (sialyl-type 2 LacNAc) derivatives to form Lewis x (Lex) (CD15) and Lewis y (Ley) antigenic epitopes involved in cell adhesion and differentiation. Generates Lex epitopes in the brain, presumably playing a role in the maintenance of neuronal stemness and neurite outgrowth in progenitor neural cells. Fucosylates the internal type 2 LacNAc unit of the polylactosamine chain to form VIM-2 antigen that serves as recognition epitope for SELE. Can also modify milk oligosaccharides in particular type 2 tetrasaccharide LNnT. The polypeptide is 4-galactosyl-N-acetylglucosaminide 3-alpha-L-fucosyltransferase 9 (Rattus norvegicus (Rat)).